The sequence spans 223 residues: MPITDWPADERPREKLLSRGAAALSDAELLAIFLRTGVAGKTAVDLARELLSRFGGLRPLLQADLVSFSSARGLGSAKYAQLQAVLEMGRRHLSESLARGDALTSPDDTRRFLAARLRDYPFEVFACLFLDNRHRVIAFEELFRGTIDGASVHPREVVRRALAHNAAALILAHNHPSGVAEPSRSDEAITRRLRDALALVDIRVLDHVVVGDSLVSFAERGLL.

In terms of domain architecture, MPN spans 102-223 (ALTSPDDTRR…LVSFAERGLL (122 aa)). Positions 173, 175, and 186 each coordinate Zn(2+). The JAMM motif motif lies at 173-186 (HNHPSGVAEPSRSD).

Belongs to the UPF0758 family.

The polypeptide is UPF0758 protein Tgr7_0100 (Thioalkalivibrio sulfidiphilus (strain HL-EbGR7)).